Here is a 20-residue protein sequence, read N- to C-terminus: Citrate synthase (20 aa).

This sequence belongs to the citrate synthase family. Homohexamer.

It catalyses the reaction oxaloacetate + acetyl-CoA + H2O = citrate + CoA + H(+). It functions in the pathway carbohydrate metabolism; tricarboxylic acid cycle; isocitrate from oxaloacetate: step 1/2. Its activity is regulated as follows. Allosterically inhibited by NADH. In Streptomyces hygroscopicus, this protein is Citrate synthase (gltA).